The sequence spans 581 residues: Arginine--tRNA ligase (581 aa).

Residues 126 to 136 (PNLAKEMHVGH) carry the 'HIGH' region motif.

The protein belongs to the class-I aminoacyl-tRNA synthetase family. In terms of assembly, monomer.

The protein resides in the cytoplasm. It catalyses the reaction tRNA(Arg) + L-arginine + ATP = L-arginyl-tRNA(Arg) + AMP + diphosphate. The polypeptide is Arginine--tRNA ligase (Shewanella putrefaciens (strain CN-32 / ATCC BAA-453)).